The chain runs to 144 residues: Maximins 11/H1 (144 aa).

An N-terminal signal peptide occupies residues 1–18 (MNFKYIVAVSFLIASAYA). Positions 19 to 43 (RSEENDEQSLSQRDVLEEESLREIR) are excised as a propeptide. An Asparagine amide modification is found at N70. Positions 74-123 (TAEDHEVMKRLEAVMRDLDSLDYPEEASERETRGFNQEEIANLFTKKEKR) are excised as a propeptide. Leucine amide is present on L143.

This sequence belongs to the bombinin family. In terms of tissue distribution, expressed by the skin glands.

Its subcellular location is the secreted. Functionally, maximin-11 shows antimicrobial activity against bacteria and against the fungus C.albicans. It has little hemolytic activity. In terms of biological role, maximin-H1 shows antibacterial activity against both Gram-positive and Gram-negative bacteria. It also shows antimicrobial activity against the fungus C.albicans. Shows strong hemolytic activity. The polypeptide is Maximins 11/H1 (Bombina maxima (Giant fire-bellied toad)).